Consider the following 417-residue polypeptide: Maltodextrin-binding protein MdxE (417 aa).

The N-terminal stretch at 1–22 (MVLLKKGFAILAASFLAIGLAA) is a signal peptide. Cys23 carries the N-palmitoyl cysteine lipid modification. Cys23 carries the S-diacylglycerol cysteine lipid modification.

The protein belongs to the bacterial solute-binding protein 1 family. As to quaternary structure, the complex is composed of two ATP-binding proteins (MsmX), two transmembrane proteins (MdxF and MdxG) and a solute-binding protein (MdxE).

Its subcellular location is the cell membrane. Its activity is regulated as follows. Inhibited by glucose and lactose. Functionally, part of the ABC transporter complex involved in maltodextrin import. Binds maltodextrin. Can also bind maltose with low affinity, but is not involved in its uptake. This Bacillus subtilis (strain 168) protein is Maltodextrin-binding protein MdxE (mdxE).